A 153-amino-acid polypeptide reads, in one-letter code: Cofilin (153 aa).

Positions 15 to 147 constitute an ADF-H domain; the sequence is GVAVNDSALQ…AYESVLERVS (133 aa).

Belongs to the actin-binding proteins ADF family.

It localises to the cytoplasm. The protein localises to the cytoskeleton. Its subcellular location is the nucleus matrix. In terms of biological role, controls reversibly actin polymerization and depolymerization in a pH-sensitive manner. It has the ability to bind G- and F-actin in a 1:1 ratio of cofilin to actin. Binding to F-actin is regulated by tropomyosin. It is the major component of intranuclear and cytoplasmic actin rods. Required for accumulation of actin at the cell division site via depolymerizing actin at the cell ends. In association with myosin II has a role in the assembly of the contractile ring via severing actin filaments. Involved in the maintenance of the contractile ring once formed. In association with profilin and capping protein, has a role in the mitotic reorganization of the actin cytoskeleton. The polypeptide is Cofilin (COF1) (Yarrowia lipolytica (strain CLIB 122 / E 150) (Yeast)).